Consider the following 249-residue polypeptide: O-methyltransferase adaD (249 aa).

The segment covering 1 to 15 (MSSVTLTTTTTTTST) has biased composition (low complexity). Residues 1-26 (MSSVTLTTTTTTTSTPPKPTPKDEPQ) are disordered.

Belongs to the methyltransferase superfamily.

It catalyses the reaction 2-acetyl-3,4a,8,10,11,12a-hexahydroxy-1,4,4a,5,12,12a-hexahydrotetracene-1,12-dione + S-adenosyl-L-methionine = TAN-1612 + S-adenosyl-L-homocysteine + H(+). It functions in the pathway secondary metabolite biosynthesis. O-methyltransferase; part of the gene cluster that mediates the biosynthesis of the linear tetracyclic TAN-1612 neuropeptide Y receptor antagonist. The decaketide backbone of TAN-1612 is synthesized by the non-reducing polyketide synthase adaA via condensation of one acetyl-CoA starter unit with 9 malonyl-CoA units. The FAD-dependent monooxygenase adaC then performs hydroxylation at C2 while the polaketide chain is still attached to the NRPKS adaA. The alpha-hydroxylation step at C2 appears to be crucial for the following C18-C1 Claisen cyclization and release of the C9-hydroxyl version of TAN-1612 from the NRPKS adaA, two steps performed by the lactamase-like protein adaB. Finally, the O-methyltransferase adaD performs the C9 O-methylation to complete the biosynthesis of TAN-1612. The chain is O-methyltransferase adaD from Aspergillus niger.